The following is a 235-amino-acid chain: Uridylate kinase (235 aa).

Position 9-12 (9-12 (KISG)) interacts with ATP. Gly-50 is a binding site for UMP. ATP is bound by residues Gly-51 and Arg-55. UMP is bound by residues Asp-70 and 131 to 138 (TGFPYFTT). ATP contacts are provided by Asn-159, Tyr-165, and Asp-168.

Belongs to the UMP kinase family. As to quaternary structure, homohexamer; trimer of dimers.

The protein localises to the cytoplasm. It carries out the reaction UMP + ATP = UDP + ADP. Its pathway is pyrimidine metabolism; CTP biosynthesis via de novo pathway; UDP from UMP (UMPK route): step 1/1. With respect to regulation, unlike other bacteria, is not activated by GTP. UTP is a competitive inhibitor against UMP and a non-competitive inhibitor toward ATP. Catalyzes the reversible phosphorylation of UMP to UDP, with ATP as the most efficient phosphate donor. Is also able to phosphorylate dUMP. The protein is Uridylate kinase (pyrH) of Ureaplasma parvum serovar 3 (strain ATCC 700970).